Consider the following 419-residue polypeptide: Divinyl chlorophyllide a 8-vinyl-reductase, chloroplastic (419 aa).

Residues 1–71 (MSICSTVGAG…PIVVSSTPVV (71 aa)) constitute a chloroplast transit peptide.

It is found in the plastid. The protein resides in the chloroplast. It catalyses the reaction protochlorophyllide a + NADP(+) = 3,8-divinyl protochlorophyllide a + NADPH + H(+). Its pathway is porphyrin-containing compound metabolism; chlorophyll biosynthesis. In terms of biological role, catalyzes the conversion of divinyl chlorophyllide to monovinyl chlorophyllide. Reduces the 8-vinyl group of the tetrapyrrole to an ethyl group using NADPH as the reductant. The best substrate is (3,8-divinyl)-chlorophyllide a (DV-Chlidea). Very low activity with (3,8-divinyl)-protochlorophyllide a (DV-Pchlidea) and (3,8-divinyl)-magnesium-protoporphyrin IX monomethyl ester (DV-MPE). No activity with (3,8-divinyl)-magnesium-protoporphyrin IX (DV-Mg-Proto) and (3,8-divinyl)-chlorophyll a (DV-Chla). This is Divinyl chlorophyllide a 8-vinyl-reductase, chloroplastic (DVR) from Cucumis sativus (Cucumber).